The sequence spans 288 residues: Lipoyl synthase (288 aa).

Residues Cys-39, Cys-44, Cys-50, Cys-65, Cys-69, Cys-72, and Ser-276 each coordinate [4Fe-4S] cluster. The 215-residue stretch at 51–265 folds into the Radical SAM core domain; the sequence is WGKGTATFMI…KETGLKKGFE (215 aa).

This sequence belongs to the radical SAM superfamily. Lipoyl synthase family. [4Fe-4S] cluster serves as cofactor.

Its subcellular location is the cytoplasm. It catalyses the reaction [[Fe-S] cluster scaffold protein carrying a second [4Fe-4S](2+) cluster] + N(6)-octanoyl-L-lysyl-[protein] + 2 oxidized [2Fe-2S]-[ferredoxin] + 2 S-adenosyl-L-methionine + 4 H(+) = [[Fe-S] cluster scaffold protein] + N(6)-[(R)-dihydrolipoyl]-L-lysyl-[protein] + 4 Fe(3+) + 2 hydrogen sulfide + 2 5'-deoxyadenosine + 2 L-methionine + 2 reduced [2Fe-2S]-[ferredoxin]. It participates in protein modification; protein lipoylation via endogenous pathway; protein N(6)-(lipoyl)lysine from octanoyl-[acyl-carrier-protein]: step 2/2. In terms of biological role, catalyzes the radical-mediated insertion of two sulfur atoms into the C-6 and C-8 positions of the octanoyl moiety bound to the lipoyl domains of lipoate-dependent enzymes, thereby converting the octanoylated domains into lipoylated derivatives. The polypeptide is Lipoyl synthase (Bacteroides fragilis (strain ATCC 25285 / DSM 2151 / CCUG 4856 / JCM 11019 / LMG 10263 / NCTC 9343 / Onslow / VPI 2553 / EN-2)).